We begin with the raw amino-acid sequence, 796 residues long: Lon protease (796 aa).

The region spanning leucine 19–proline 213 is the Lon N-terminal domain. Glycine 376–threonine 383 provides a ligand contact to ATP. A Lon proteolytic domain is found at glutamate 612 to asparagine 793. Active-site residues include serine 699 and lysine 742.

This sequence belongs to the peptidase S16 family. As to quaternary structure, homohexamer. Organized in a ring with a central cavity.

The protein localises to the cytoplasm. The enzyme catalyses Hydrolysis of proteins in presence of ATP.. ATP-dependent serine protease that mediates the selective degradation of mutant and abnormal proteins as well as certain short-lived regulatory proteins. Required for cellular homeostasis and for survival from DNA damage and developmental changes induced by stress. Degrades polypeptides processively to yield small peptide fragments that are 5 to 10 amino acids long. Binds to DNA in a double-stranded, site-specific manner. The polypeptide is Lon protease (Mycoplasma mycoides subsp. mycoides SC (strain CCUG 32753 / NCTC 10114 / PG1)).